The chain runs to 404 residues: S-adenosylmethionine synthase (404 aa).

Residue histidine 17 coordinates ATP. Position 19 (aspartate 19) interacts with Mg(2+). Residue glutamate 45 coordinates K(+). 2 residues coordinate L-methionine: glutamate 58 and glutamine 101. Residues 101 to 111 (QSPDINRGVDR) form a flexible loop region. ATP contacts are provided by residues 172–174 (DAK), 245–246 (RF), aspartate 254, 260–261 (RK), alanine 277, and lysine 281. L-methionine is bound at residue aspartate 254. L-methionine is bound at residue lysine 285.

It belongs to the AdoMet synthase family. In terms of assembly, homotetramer; dimer of dimers. Mg(2+) is required as a cofactor. It depends on K(+) as a cofactor.

It localises to the cytoplasm. It carries out the reaction L-methionine + ATP + H2O = S-adenosyl-L-methionine + phosphate + diphosphate. Its pathway is amino-acid biosynthesis; S-adenosyl-L-methionine biosynthesis; S-adenosyl-L-methionine from L-methionine: step 1/1. Catalyzes the formation of S-adenosylmethionine (AdoMet) from methionine and ATP. The overall synthetic reaction is composed of two sequential steps, AdoMet formation and the subsequent tripolyphosphate hydrolysis which occurs prior to release of AdoMet from the enzyme. In Pelodictyon phaeoclathratiforme (strain DSM 5477 / BU-1), this protein is S-adenosylmethionine synthase.